A 377-amino-acid chain; its full sequence is Nitric oxide reductase FlRd-NAD(+) reductase (377 aa).

The protein belongs to the FAD-dependent oxidoreductase family. It depends on FAD as a cofactor.

The protein resides in the cytoplasm. It carries out the reaction 2 reduced [nitric oxide reductase rubredoxin domain] + NAD(+) + H(+) = 2 oxidized [nitric oxide reductase rubredoxin domain] + NADH. Its pathway is nitrogen metabolism; nitric oxide reduction. One of at least two accessory proteins for anaerobic nitric oxide (NO) reductase. Reduces the rubredoxin moiety of NO reductase. The polypeptide is Nitric oxide reductase FlRd-NAD(+) reductase (Klebsiella pneumoniae subsp. pneumoniae (strain ATCC 700721 / MGH 78578)).